The following is a 211-amino-acid chain: FMN-dependent NADH:quinone oxidoreductase (211 aa).

Position 17–19 (17–19 (SYS)) interacts with FMN.

This sequence belongs to the azoreductase type 1 family. In terms of assembly, homodimer. FMN is required as a cofactor.

It carries out the reaction 2 a quinone + NADH + H(+) = 2 a 1,4-benzosemiquinone + NAD(+). The catalysed reaction is N,N-dimethyl-1,4-phenylenediamine + anthranilate + 2 NAD(+) = 2-(4-dimethylaminophenyl)diazenylbenzoate + 2 NADH + 2 H(+). Quinone reductase that provides resistance to thiol-specific stress caused by electrophilic quinones. In terms of biological role, also exhibits azoreductase activity. Catalyzes the reductive cleavage of the azo bond in aromatic azo compounds to the corresponding amines. This Bacillus pumilus (strain SAFR-032) protein is FMN-dependent NADH:quinone oxidoreductase.